A 26-amino-acid polypeptide reads, in one-letter code: Photosystem II stability/assembly factor HCF136, chloroplastic (26 aa).

The protein belongs to the Ycf48 family.

The protein resides in the plastid. It localises to the chloroplast thylakoid lumen. Essential for photosystem II (PSII) biogenesis; required for assembly of an early intermediate in PSII assembly that includes D2 (psbD) and cytochrome b559. The polypeptide is Photosystem II stability/assembly factor HCF136, chloroplastic (Populus euphratica (Euphrates poplar)).